Here is a 119-residue protein sequence, read N- to C-terminus: Ribonuclease P protein component (119 aa).

It belongs to the RnpA family. In terms of assembly, consists of a catalytic RNA component (M1 or rnpB) and a protein subunit.

It carries out the reaction Endonucleolytic cleavage of RNA, removing 5'-extranucleotides from tRNA precursor.. In terms of biological role, RNaseP catalyzes the removal of the 5'-leader sequence from pre-tRNA to produce the mature 5'-terminus. It can also cleave other RNA substrates such as 4.5S RNA. The protein component plays an auxiliary but essential role in vivo by binding to the 5'-leader sequence and broadening the substrate specificity of the ribozyme. The protein is Ribonuclease P protein component of Proteus mirabilis (strain HI4320).